We begin with the raw amino-acid sequence, 903 residues long: MVPRLTVILFLTLHLLPGMKSSMVNLINNGYDGIVIAINPSVPEDEKLIQNIKEMVTEASTYLFHATKRRVYFRNVSILIPMTWKSKSEYLMPKQESYDQAEVIVANPYLKHGDDPYTLQYGRCGEKGQYIHFTPNFLLTNNLPIYGSRGRAFVHEWAHLRWGIFDEYNGDQPFYISRRNTIEATRCSTHITGTNVIVKCQGGSCITRPCRRDSQTGLYEAKCTFIPEKSQTARESIMFMQSLHSVTEFCTEKTHNVEAPNLQNKMCNGKSTWDVIMNSTDFQNTSPMTEMNPPTQPTFSLLKSKQRVVCLVLDKSGSMSSEDRLFRMNQAAELFLIQIIEKGSLVGMVTFDSVAEIRNNLTKITDDNVYENITANLPQEANGGTSICRGLKAGFQAIIQSQQSTSGSEIILLTDGEDNEIHSCIEEVKQSGVIIHTIALGPSAAKELETLSDMTGGHRFYANKDINGLTNAFSRISSRSGSITQQTIQLESKALAITEKKWVNGTVPVDSTIGNDTFFVVTWTIKKPEILLQDPKGKKYKTSDFKEDKLNIHSARLRIPGIAETGTWTYSLLNNHASPQILTVTVTTRARSPTTPPVTATAHMSQNTAHYPSPVIVYAQVSQGFLPVLGINVTAIIETEDGHQVTLELWDNGAGADTVKNDGIYSRYFTDYRGNGRYSLKVHAEARNNTARLSLRQPQNKALYIPGYIENGKIILNPPRPEVKDDLAKAEIEDFSRLTSGGSFTVSGAPPGNHPSVLPPNKIIDLEAKFKEDHIQLSWTAPANVLDKGKANSYIIRISKSFLDLQKDFDNATLVNTSSLKPKEAGSDENFEFKPEPFRIENGTNFYIAVQAINEANLTSEVSNIAQAIKFIPMPEDSVPALGTKISAINLAIFALAMILSIV.

The first 21 residues, 1–21, serve as a signal peptide directing secretion; the sequence is MVPRLTVILFLTLHLLPGMKS. Residues 45–199 are metalloprotease domain; it reads DEKLIQNIKE…HITGTNVIVK (155 aa). His-155 contacts Zn(2+). Glu-156 is an active-site residue. The Zn(2+) site is built by His-159 and Asp-166. Residues 308-476 form the VWFA domain; that stretch reads VVCLVLDKSG…NGLTNAFSRI (169 aa). Residues Asn-360, Asn-372, Asn-504, and Asn-842 are each glycosylated (N-linked (GlcNAc...) asparagine). The helical transmembrane segment at 883 to 903 threads the bilayer; that stretch reads GTKISAINLAIFALAMILSIV.

Belongs to the CLCR family. Post-translationally, glycosylated. In terms of processing, the 125-kDa product is autoproteolytically processed by the metalloprotease domain and yields to two cell-surface-associated subunits, a 90-kDa protein and a group of 37- to 41-kDa proteins. The cleavage is necessary for calcium-activated chloride channel (CaCC) activation activity. As to expression, trachea.

The protein resides in the apical cell membrane. May be involved in mediating calcium-activated chloride conductance. May play critical roles in goblet cell metaplasia, mucus hypersecretion, cystic fibrosis and AHR. May be involved in the regulation of mucus production and/or secretion by goblet cells. Involved in the regulation of tissue inflammation in the innate immune response. May play a role as a tumor suppressor. Induces MUC5AC. This is Calcium-activated chloride channel regulator 1 from Bos taurus (Bovine).